The chain runs to 285 residues: Probable xyloglucan endotransglucosylase/hydrolase protein 12 (285 aa).

The first 25 residues, 1 to 25 (MAAFATKQSPLLLASLLILIGVATG), serve as a signal peptide directing secretion. The GH16 domain maps to 26 to 215 (SFYDSFDITW…WTNAPFSASY (190 aa)). The active-site Nucleophile is Glu-101. Catalysis depends on Glu-105, which acts as the Proton donor. Residue Glu-105 participates in xyloglucan binding. N-linked (GlcNAc...) asparagine glycosylation occurs at Asn-109. Xyloglucan-binding positions include 118 to 120 (HTN), 128 to 130 (NRE), 194 to 195 (DW), and Gly-199. 2 disulfide bridges follow: Cys-224–Cys-235 and Cys-268–Cys-282. Xyloglucan is bound at residue Arg-273.

The protein belongs to the glycosyl hydrolase 16 family. XTH group 2 subfamily. In terms of processing, contains at least one intrachain disulfide bond essential for its enzymatic activity. Root specific.

The protein resides in the secreted. The protein localises to the cell wall. It localises to the extracellular space. Its subcellular location is the apoplast. The enzyme catalyses breaks a beta-(1-&gt;4) bond in the backbone of a xyloglucan and transfers the xyloglucanyl segment on to O-4 of the non-reducing terminal glucose residue of an acceptor, which can be a xyloglucan or an oligosaccharide of xyloglucan.. Catalyzes xyloglucan endohydrolysis (XEH) and/or endotransglycosylation (XET). Cleaves and religates xyloglucan polymers, an essential constituent of the primary cell wall, and thereby participates in cell wall construction of growing tissues. The protein is Probable xyloglucan endotransglucosylase/hydrolase protein 12 (XTH12) of Arabidopsis thaliana (Mouse-ear cress).